The primary structure comprises 392 residues: Ceramide phosphoethanolamine synthase (392 aa).

Over 1 to 10 (MIGPSSQISK) the chain is Lumenal. The helical transmembrane segment at 11 to 31 (ILLTLLFLLIIFYVFMDVELY) threads the bilayer. Residues 32–140 (LRIHNYAIER…MFDNVIGFSR (109 aa)) are Cytoplasmic-facing. The segment covering 59 to 82 (SESGSGSIGGSSSSSSSSSSSTST) has biased composition (low complexity). Positions 59–91 (SESGSGSIGGSSSSSSSSSSSTSTKLPTAGDRQ) are disordered. Residues 141–161 (STFITPNMISFFHVGVACLAG) form a helical membrane-spanning segment. Topologically, residues 162 to 212 (KLVASDSLGYRRLGVLLFQIRTFLDDLDGHVARVRKHIRGERSEIGTSGYY) are lumenal. A helical membrane pass occupies residues 213–233 (VDGLCDGLGCIALLLGIFFYL). Residues 234 to 271 (KNNPPRRGYSIIPMSDSKLPEPTMMIPKMKATTRKVAK) are Cytoplasmic-facing. A helical transmembrane segment spans residues 272 to 288 (NVISFTGQLLLSSTAWN). Residues 289–319 (RYIAVYQNMLEREDVSGNQSHCQDYVFKSTW) lie on the Lumenal side of the membrane. Residues 320 to 340 (FFCVAWMWRIVNVHALLHCVL) form a helical membrane-spanning segment. Residues 341–356 (LSIFCDKLWDFLRAIR) are Cytoplasmic-facing. Residues 357 to 377 (YSGYIILLVAICLTEMHILEA) form a helical membrane-spanning segment. The Lumenal portion of the chain corresponds to 378-392 (QNYIFNSTACSNISL).

Belongs to the CDP-alcohol phosphatidyltransferase class-I family. It depends on Mn(2+) as a cofactor.

Its subcellular location is the membrane. The protein localises to the golgi apparatus membrane. The protein resides in the cell membrane. The catalysed reaction is CDP-ethanolamine + an N-acylsphing-4-enine = an N-acylsphing-4-enine 1-phosphoethanolamine + CMP + H(+). It catalyses the reaction CDP-ethanolamine + an N-acyl-sphingoid base = an N-acyl-sphingoid 1-phosphoethanolamine + CMP + H(+). Functionally, catalyzes the biosynthesis of ceramide phosphoethanolamine (CPE) through the transfer of a phosphatidyl head group from cytidine 5'-diphosphate (CDP)-ethanolamine on to the primary hydroxyl of ceramide. In Drosophila melanogaster (Fruit fly), this protein is Ceramide phosphoethanolamine synthase.